Here is a 119-residue protein sequence, read N- to C-terminus: Ribosome-binding factor A (119 aa).

The protein belongs to the RbfA family. Monomer. Binds 30S ribosomal subunits, but not 50S ribosomal subunits or 70S ribosomes.

It is found in the cytoplasm. One of several proteins that assist in the late maturation steps of the functional core of the 30S ribosomal subunit. Associates with free 30S ribosomal subunits (but not with 30S subunits that are part of 70S ribosomes or polysomes). Required for efficient processing of 16S rRNA. May interact with the 5'-terminal helix region of 16S rRNA. The chain is Ribosome-binding factor A from Mycoplasmoides gallisepticum (strain R(low / passage 15 / clone 2)) (Mycoplasma gallisepticum).